The sequence spans 143 residues: Ribonuclease H (143 aa).

An RNase H type-1 domain is found at 1–136 (MQEIEIFCDG…CDSLAKLEAQ (136 aa)). 4 residues coordinate Mg(2+): aspartate 9, glutamate 47, aspartate 69, and aspartate 128.

It belongs to the RNase H family. In terms of assembly, monomer. Requires Mg(2+) as cofactor.

It is found in the cytoplasm. It catalyses the reaction Endonucleolytic cleavage to 5'-phosphomonoester.. In terms of biological role, endonuclease that specifically degrades the RNA of RNA-DNA hybrids. In Helicobacter acinonychis (strain Sheeba), this protein is Ribonuclease H.